We begin with the raw amino-acid sequence, 307 residues long: Farnesol kinase, chloroplastic (307 aa).

A chloroplast-targeting transit peptide spans methionine 1 to alanine 65. Transmembrane regions (helical) follow at residues valine 77–isoleucine 97, isoleucine 116–phenylalanine 136, alanine 137–histidine 157, glycine 177–lysine 194, proline 197–glycine 217, isoleucine 237–phenylalanine 257, and glycine 265–isoleucine 285.

This sequence belongs to the polyprenol kinase family.

The protein localises to the plastid. Its subcellular location is the chloroplast membrane. It catalyses the reaction (2E,6E)-farnesol + CTP = (2E,6E)-farnesyl phosphate + CDP + H(+). The enzyme catalyses (2E,6E)-farnesol + ATP = (2E,6E)-farnesyl phosphate + ADP + H(+). It carries out the reaction (2E)-geraniol + ATP = (2E)-geranyl phosphate + ADP + H(+). The catalysed reaction is (2E,6E,10E)-geranylgeraniol + ATP = (2E,6E,10E)-geranylgeranyl phosphate + ADP + H(+). In terms of biological role, kinase involved in negative regulation of abscisic acid (ABA) signaling. Substrate preference is farnesol &gt; geraniol &gt; geranylgeraniol, but has no activity with farnesyl phosphate. Can use CTP &gt; ATP &gt; GTP = UTP as phosphoryl donor. The sequence is that of Farnesol kinase, chloroplastic from Arabidopsis thaliana (Mouse-ear cress).